A 306-amino-acid chain; its full sequence is Methionyl-tRNA formyltransferase (306 aa).

Residue 110-113 coordinates (6S)-5,6,7,8-tetrahydrofolate; it reads SLLP.

Belongs to the Fmt family.

The enzyme catalyses L-methionyl-tRNA(fMet) + (6R)-10-formyltetrahydrofolate = N-formyl-L-methionyl-tRNA(fMet) + (6S)-5,6,7,8-tetrahydrofolate + H(+). Its function is as follows. Attaches a formyl group to the free amino group of methionyl-tRNA(fMet). The formyl group appears to play a dual role in the initiator identity of N-formylmethionyl-tRNA by promoting its recognition by IF2 and preventing the misappropriation of this tRNA by the elongation apparatus. The polypeptide is Methionyl-tRNA formyltransferase (Brucella abortus (strain S19)).